The sequence spans 696 residues: Elongation factor G (696 aa).

The tr-type G domain occupies 8–282 (KDYRNIGIMA…AVVDYLPSPL (275 aa)). GTP is bound by residues 17-24 (AHIDAGKT), 81-85 (DTPGH), and 135-138 (NKMD).

It belongs to the TRAFAC class translation factor GTPase superfamily. Classic translation factor GTPase family. EF-G/EF-2 subfamily.

It localises to the cytoplasm. In terms of biological role, catalyzes the GTP-dependent ribosomal translocation step during translation elongation. During this step, the ribosome changes from the pre-translocational (PRE) to the post-translocational (POST) state as the newly formed A-site-bound peptidyl-tRNA and P-site-bound deacylated tRNA move to the P and E sites, respectively. Catalyzes the coordinated movement of the two tRNA molecules, the mRNA and conformational changes in the ribosome. This Mycoplasmopsis synoviae (strain 53) (Mycoplasma synoviae) protein is Elongation factor G.